A 354-amino-acid chain; its full sequence is DNA polymerase IV (354 aa).

In terms of domain architecture, UmuC spans 6 to 187; that stretch reads IIHVDCDCFY…LPVARLHGVG (182 aa). Residues Asp-10 and Asp-105 each coordinate Mg(2+). Glu-106 is an active-site residue.

This sequence belongs to the DNA polymerase type-Y family. As to quaternary structure, monomer. Requires Mg(2+) as cofactor.

The protein resides in the cytoplasm. The enzyme catalyses DNA(n) + a 2'-deoxyribonucleoside 5'-triphosphate = DNA(n+1) + diphosphate. Its function is as follows. Poorly processive, error-prone DNA polymerase involved in untargeted mutagenesis. Copies undamaged DNA at stalled replication forks, which arise in vivo from mismatched or misaligned primer ends. These misaligned primers can be extended by PolIV. Exhibits no 3'-5' exonuclease (proofreading) activity. May be involved in translesional synthesis, in conjunction with the beta clamp from PolIII. This is DNA polymerase IV from Pseudomonas putida (strain ATCC 47054 / DSM 6125 / CFBP 8728 / NCIMB 11950 / KT2440).